We begin with the raw amino-acid sequence, 134 residues long: Fluoride-specific ion channel FluC 2 (134 aa).

The next 4 helical transmembrane spans lie at 10 to 30 (LSAE…GALL), 43 to 63 (LLVN…PAAP), 67 to 87 (LLVG…MVDA), and 100 to 120 (FGLI…GFWL). Na(+) contacts are provided by G75 and T78.

Belongs to the fluoride channel Fluc/FEX (TC 1.A.43) family.

The protein resides in the cell inner membrane. The catalysed reaction is fluoride(in) = fluoride(out). With respect to regulation, na(+) is not transported, but it plays an essential structural role and its presence is essential for fluoride channel function. Functionally, fluoride-specific ion channel. Important for reducing fluoride concentration in the cell, thus reducing its toxicity. The sequence is that of Fluoride-specific ion channel FluC 2 from Synechococcus sp. (strain CC9902).